A 432-amino-acid polypeptide reads, in one-letter code: Phosphoribosylamine--glycine ligase (432 aa).

Positions 110–316 (RNFMKDNDIE…MIDVMSAVVN (207 aa)) constitute an ATP-grasp domain. Residue 137-194 (IEELGSVAIKPAGLTGGKGVKVMGDQLPDTGAAYDYAVSLLDGDNVVVEENLVGEEFT) participates in ATP binding. Mg(2+)-binding residues include Q274, E286, and N288. Mn(2+) is bound by residues Q274, E286, and N288.

The protein belongs to the GARS family. The cofactor is Mg(2+). It depends on Mn(2+) as a cofactor.

It carries out the reaction 5-phospho-beta-D-ribosylamine + glycine + ATP = N(1)-(5-phospho-beta-D-ribosyl)glycinamide + ADP + phosphate + H(+). It participates in purine metabolism; IMP biosynthesis via de novo pathway; N(1)-(5-phospho-D-ribosyl)glycinamide from 5-phospho-alpha-D-ribose 1-diphosphate: step 2/2. The polypeptide is Phosphoribosylamine--glycine ligase (Methanococcoides burtonii (strain DSM 6242 / NBRC 107633 / OCM 468 / ACE-M)).